The sequence spans 160 residues: Transcription elongation factor GreA (160 aa).

Residues 4–70 (QKQYPMTQEG…IEQDIQRIEH (67 aa)) are a coiled coil.

The protein belongs to the GreA/GreB family.

Functionally, necessary for efficient RNA polymerase transcription elongation past template-encoded arresting sites. The arresting sites in DNA have the property of trapping a certain fraction of elongating RNA polymerases that pass through, resulting in locked ternary complexes. Cleavage of the nascent transcript by cleavage factors such as GreA or GreB allows the resumption of elongation from the new 3'terminus. GreA releases sequences of 2 to 3 nucleotides. This Staphylococcus carnosus (strain TM300) protein is Transcription elongation factor GreA.